The primary structure comprises 674 residues: MAAAKVALTKRADPAELRTIFLKYASIEKNGEFFTSPNDFVTRYLNIFGESQPNPKTVELLSGVADQTKDGLISFQEFVAFESVLCAPDALFMVAFQLFDKAGKGEVTFEDVKQVFGQTTIHQHIPFNWDSEFVQLHFGKERKRHLTYAEFTQFLLEIQLEHAKQAFVQRDNASTGRVTAIDFRDIMVTIRPHVLTPFVEECLVAAAGGTTSHQVSFSYFNGFNSLLNNMELTRKIYSTLAGNRKDVEVTKEEFVLAAQKFGQVTPMEVDILFRLADLYEPRGRMTLADIERIAPLEEGTLPFNLAEAQRQKASGDSARPVLLQVAESAYRFGLGSVAGAVGATAVYPIDLVKTRMQNQRSTGSFVGELMYKNSFDCFKKVLRYEGFFGLYRGLLPQLLGVAPEKAIKLTVNDFVRDKFMHKDGSVPLAAEILAGGCAGGSQVIFTNPLEIVKIRLQVAGEITTGPRVSALSVVRDLGFFGIYKGAKACFLRDIPFSAIYFPCYAHARASFANEDGQVSPGSLLLAGAIAGMPAASLVTPADVIKTRLQVAARAGQTTYSGVIDCFKKILREEGPKALWKGAARVFRSSPQFGVTLLTYELLQRWFYIDFGGVKPMGSEPVPKSRINLPAPNPDHVGGYKLAVATFAGIENKFGLYLPLFKPSVPTSEAIGGGP.

Ala2 is modified (N-acetylalanine). Positions Ala2 to Pro295 are regulatory N-terminal domain. The Mitochondrial intermembrane segment spans residues Ala2–Arg331. EF-hand domains lie at Ser51–Cys86, Ala87–His122, Gln123–Glu157, and Ile158–His193. Ca(2+) contacts are provided by Asp66, Thr68, Asp70, Leu72, and Glu77. Positions Leu296–Gln311 are linker loop domain. The segment at Val321 to Gly611 is carrier domain. Solcar repeat units follow at residues Ala326–Lys418, Val426–Ser510, and Val518–Trp605. A helical transmembrane segment spans residues Phe332 to Ile349. Residues Asp350–Arg392 lie on the Mitochondrial matrix side of the membrane. Lys353 and Lys372 each carry N6-acetyllysine. A helical transmembrane segment spans residues Gly393–Asn412. Residues Asp413 to Gly435 lie on the Mitochondrial intermembrane side of the membrane. The chain crosses the membrane as a helical span at residues Gly436–Leu449. Residues Glu450 to Lys484 lie on the Mitochondrial matrix side of the membrane. Lys453 is subject to N6-methyllysine. Residue Lys484 is modified to N6-acetyllysine; alternate. Lys484 carries the N6-succinyllysine; alternate modification. A helical membrane pass occupies residues Gly485–Tyr504. The Mitochondrial intermembrane portion of the chain corresponds to Ala505–Leu523. Residues Leu524 to Ala541 traverse the membrane as a helical segment. The Mitochondrial matrix segment spans residues Asp542 to Lys580. Lys580 carries the post-translational modification N6-succinyllysine. The helical transmembrane segment at Gly581–Tyr599 threads the bilayer. Over Glu600–Pro674 the chain is Mitochondrial intermembrane. Residues Gly612–Pro674 are C-terminal domain. At Lys661 the chain carries N6-acetyllysine.

Belongs to the mitochondrial carrier (TC 2.A.29) family. As to quaternary structure, homodimer (via N-terminus).

Its subcellular location is the mitochondrion inner membrane. It catalyses the reaction L-aspartate(in) + L-glutamate(out) + H(+)(out) = L-aspartate(out) + L-glutamate(in) + H(+)(in). It carries out the reaction 3-sulfino-L-alanine(out) + L-glutamate(in) + H(+)(in) = 3-sulfino-L-alanine(in) + L-glutamate(out) + H(+)(out). The catalysed reaction is 3-sulfino-L-alanine(out) + L-aspartate(in) = 3-sulfino-L-alanine(in) + L-aspartate(out). In terms of biological role, mitochondrial electrogenic aspartate/glutamate antiporter that favors efflux of aspartate and entry of glutamate and proton within the mitochondria as part of the malate-aspartate shuttle. Also mediates the uptake of L-cysteinesulfinate (3-sulfino-L-alanine) by mitochondria in exchange of L-glutamate and proton. Can also exchange L-cysteinesulfinate with aspartate in their anionic form without any proton translocation. Lacks transport activity towards gamma-aminobutyric acid (GABA). The protein is Electrogenic aspartate/glutamate antiporter SLC25A13, mitochondrial of Macaca fascicularis (Crab-eating macaque).